We begin with the raw amino-acid sequence, 226 residues long: RNA annealing protein YRA1 (226 aa).

Residues 1 to 62 (MSANLDKSLD…PIRKNTRAPP (62 aa)) form a disordered region. Residue S2 is modified to N-acetylserine. 2 positions are modified to phosphoserine: S8 and S100. In terms of domain architecture, RRM spans 78-158 (VKVNVEGLPR…SRLRLNLIVD (81 aa)). The disordered stretch occupies residues 173–226 (AMPQKGGNAPRPVKRGPNRKAAMAKSQNKPKREKPAKKSLEDLDKEMADYFEKK). A compositionally biased stretch (basic and acidic residues) spans 208–226 (AKKSLEDLDKEMADYFEKK).

Component of the transcription/export (TREX) complex, which is at least is formed of SUB2, TEX1 and YRA1 and the THO complex composed of HPR1, MFT1, THO2 and THP1. Interacts with RDS3 and YRA2.

The protein localises to the nucleus. In terms of biological role, RNA-binding RNA annealing protein. May have a role in pre-mRNA metabolism. Component the TREX complex, which operates in coupling transcription elongation to mRNA export. The sequence is that of RNA annealing protein YRA1 (YRA1) from Saccharomyces cerevisiae (strain ATCC 204508 / S288c) (Baker's yeast).